The following is a 232-amino-acid chain: Probable dihydroorotate dehydrogenase B (NAD(+)), electron transfer subunit (232 aa).

One can recognise an FAD-binding FR-type domain in the interval 1-86 (MYYTRITQIE…RGAFGSAFTP (86 aa)). The [2Fe-2S] cluster site is built by Cys202, Cys207, Cys210, and Cys219.

This sequence belongs to the PyrK family. As to quaternary structure, heterotetramer of 2 PyrK and 2 PyrD type B subunits. It depends on [2Fe-2S] cluster as a cofactor. Requires FAD as cofactor.

It participates in pyrimidine metabolism; UMP biosynthesis via de novo pathway; orotate from (S)-dihydroorotate (NAD(+) route): step 1/1. In terms of biological role, responsible for channeling the electrons from the oxidation of dihydroorotate from the FMN redox center in the PyrD type B subunit to the ultimate electron acceptor NAD(+). This Archaeoglobus fulgidus (strain ATCC 49558 / DSM 4304 / JCM 9628 / NBRC 100126 / VC-16) protein is Probable dihydroorotate dehydrogenase B (NAD(+)), electron transfer subunit.